A 216-amino-acid chain; its full sequence is Small ribosomal subunit protein uS3 (216 aa).

In terms of domain architecture, KH type-2 spans 38–106 (LRKMLKDKLY…QANIEIKEVR (69 aa)).

The protein belongs to the universal ribosomal protein uS3 family. As to quaternary structure, part of the 30S ribosomal subunit. Forms a tight complex with proteins S10 and S14.

Its function is as follows. Binds the lower part of the 30S subunit head. Binds mRNA in the 70S ribosome, positioning it for translation. The polypeptide is Small ribosomal subunit protein uS3 (Thermodesulfovibrio yellowstonii (strain ATCC 51303 / DSM 11347 / YP87)).